A 233-amino-acid chain; its full sequence is Ribonuclease HII (233 aa).

Residues 26–215 (QLVAGIDEVG…VRASEGEGLE (190 aa)) enclose the RNase H type-2 domain. The a divalent metal cation site is built by Asp32, Glu33, and Asp124. Residues 211 to 233 (GEGLETAAGRQSSEGKKGRRPRG) form a disordered region.

The protein belongs to the RNase HII family. Mn(2+) is required as a cofactor. The cofactor is Mg(2+).

The protein resides in the cytoplasm. It catalyses the reaction Endonucleolytic cleavage to 5'-phosphomonoester.. In terms of biological role, endonuclease that specifically degrades the RNA of RNA-DNA hybrids. The sequence is that of Ribonuclease HII from Syntrophobacter fumaroxidans (strain DSM 10017 / MPOB).